The following is a 506-amino-acid chain: UDP-N-acetylmuramoyl-L-alanyl-D-glutamate--2,6-diaminopimelate ligase (506 aa).

Ser-38 serves as a coordination point for UDP-N-acetyl-alpha-D-muramoyl-L-alanyl-D-glutamate. 124-130 (GTNGKTS) is an ATP binding site. UDP-N-acetyl-alpha-D-muramoyl-L-alanyl-D-glutamate is bound by residues 166 to 167 (TT), Ser-193, and Arg-201. Position 233 is an N6-carboxylysine (Lys-233). Residues Arg-401, 425–428 (DNPR), Gly-477, and Glu-481 contribute to the meso-2,6-diaminopimelate site. Positions 425–428 (DNPR) match the Meso-diaminopimelate recognition motif motif.

Belongs to the MurCDEF family. MurE subfamily. Mg(2+) serves as cofactor. Post-translationally, carboxylation is probably crucial for Mg(2+) binding and, consequently, for the gamma-phosphate positioning of ATP.

Its subcellular location is the cytoplasm. It catalyses the reaction UDP-N-acetyl-alpha-D-muramoyl-L-alanyl-D-glutamate + meso-2,6-diaminopimelate + ATP = UDP-N-acetyl-alpha-D-muramoyl-L-alanyl-gamma-D-glutamyl-meso-2,6-diaminopimelate + ADP + phosphate + H(+). It participates in cell wall biogenesis; peptidoglycan biosynthesis. Its function is as follows. Catalyzes the addition of meso-diaminopimelic acid to the nucleotide precursor UDP-N-acetylmuramoyl-L-alanyl-D-glutamate (UMAG) in the biosynthesis of bacterial cell-wall peptidoglycan. The chain is UDP-N-acetylmuramoyl-L-alanyl-D-glutamate--2,6-diaminopimelate ligase from Leptospira interrogans serogroup Icterohaemorrhagiae serovar copenhageni (strain Fiocruz L1-130).